Here is a 502-residue protein sequence, read N- to C-terminus: Rab11 family-interacting protein 4B (502 aa).

2 disordered regions span residues 1-49 (MSIQ…EEGI) and 71-98 (SALSSASLNEEQFEDYGEGEDGDCTTSS). The span at 15–29 (EEGRGVERDSDRDSA) shows a compositional bias: basic and acidic residues. Residues 71–80 (SALSSASLNE) are compositionally biased toward polar residues. Residues 81–93 (EQFEDYGEGEDGD) show a composition bias toward acidic residues. A coiled-coil region spans residues 228–482 (DVKTKLKQEN…EEINLRLRQY (255 aa)). Residues 439 to 501 (EAKNLFATQT…DHNPSILEIK (63 aa)) enclose the FIP-RBD domain.

As to quaternary structure, homodimer. Forms a complex with Rab11 (rab11a or rab11b) and arf6.

It is found in the recycling endosome membrane. It localises to the cleavage furrow. The protein localises to the midbody. The protein resides in the cytoplasmic vesicle. Functionally, acts as a regulator of endocytic traffic by participating in membrane delivery. Required for the abscission step in cytokinesis, possibly by acting as an 'address tag' delivering recycling endosome membranes to the cleavage furrow during late cytokinesis. The polypeptide is Rab11 family-interacting protein 4B (rab11fip4b) (Danio rerio (Zebrafish)).